The following is a 167-amino-acid chain: UPF0225 protein VV1358 (167 aa).

Belongs to the UPF0225 family.

The sequence is that of UPF0225 protein VV1358 from Vibrio vulnificus (strain YJ016).